A 191-amino-acid chain; its full sequence is Imidazoleglycerol-phosphate dehydratase (191 aa).

This sequence belongs to the imidazoleglycerol-phosphate dehydratase family.

The protein resides in the cytoplasm. It carries out the reaction D-erythro-1-(imidazol-4-yl)glycerol 3-phosphate = 3-(imidazol-4-yl)-2-oxopropyl phosphate + H2O. The protein operates within amino-acid biosynthesis; L-histidine biosynthesis; L-histidine from 5-phospho-alpha-D-ribose 1-diphosphate: step 6/9. This chain is Imidazoleglycerol-phosphate dehydratase, found in Methanococcoides burtonii (strain DSM 6242 / NBRC 107633 / OCM 468 / ACE-M).